We begin with the raw amino-acid sequence, 197 residues long: Phospholipid hydroperoxide glutathione peroxidase (197 aa).

Serine 40 is subject to Phosphoserine. The active site involves selenocysteine 73. Position 73 (selenocysteine 73) is a non-standard amino acid, selenocysteine.

Belongs to the glutathione peroxidase family. As to quaternary structure, monomer. Has a tendency to form higher mass oligomers. Interacts with FUNDC1; this interaction promotes GPX4 recruitment into mitochondria through TOM/TIM complex where it is degraded by mitophagy.

The protein resides in the mitochondrion. The protein localises to the cytoplasm. The enzyme catalyses a hydroperoxy polyunsaturated fatty acid + 2 glutathione = a hydroxy polyunsaturated fatty acid + glutathione disulfide + H2O. It catalyses the reaction 2 glutathione + H2O2 = glutathione disulfide + 2 H2O. The catalysed reaction is tert-butyl hydroperoxide + 2 glutathione = tert-butanol + glutathione disulfide + H2O. It carries out the reaction cumene hydroperoxide + 2 glutathione = 2-phenylpropan-2-ol + glutathione disulfide + H2O. The enzyme catalyses (9S)-hydroperoxy-(10E,12Z)-octadecadienoate + 2 glutathione = (9S)-hydroxy-(10E,12Z)-octadecadienoate + glutathione disulfide + H2O. It catalyses the reaction (13S)-hydroperoxy-(9Z,11E)-octadecadienoate + 2 glutathione = (13S)-hydroxy-(9Z,11E)-octadecadienoate + glutathione disulfide + H2O. The catalysed reaction is (5S)-hydroperoxy-(6E,8Z,11Z,14Z)-eicosatetraenoate + 2 glutathione = (5S)-hydroxy-(6E,8Z,11Z,14Z)-eicosatetraenoate + glutathione disulfide + H2O. It carries out the reaction (12R)-hydroperoxy-(5Z,8Z,10E,14Z)-eicosatetraenoate + 2 glutathione = (12R)-hydroxy-(5Z,8Z,10E,14Z)-eicosatetraenoate + glutathione disulfide + H2O. The enzyme catalyses (12S)-hydroperoxy-(5Z,8Z,10E,14Z)-eicosatetraenoate + 2 glutathione = (12S)-hydroxy-(5Z,8Z,10E,14Z)-eicosatetraenoate + glutathione disulfide + H2O. It catalyses the reaction (15S)-hydroperoxy-(5Z,8Z,11Z,13E)-eicosatetraenoate + 2 glutathione = (15S)-hydroxy-(5Z,8Z,11Z,13E)-eicosatetraenoate + glutathione disulfide + H2O. The catalysed reaction is (5S)-hydroperoxy-(6E,8Z,11Z,14Z,17Z)-eicosapentaenoate + 2 glutathione = (5S)-hydroxy-(6E,8Z,11Z,14Z,17Z)-eicosapentaenoate + glutathione disulfide + H2O. It carries out the reaction (12S)-hydroperoxy-(5Z,8Z,10E,14Z,17Z)-eicosapentaenoate + 2 glutathione = (12S)-hydroxy-(5Z,8Z,10E,14Z,17Z)-eicosapentaenoate + glutathione disulfide + H2O. The enzyme catalyses (15S)-hydroperoxy-(5Z,8Z,11Z,13E,17Z)-eicosapentaenoate + 2 glutathione = (15S)-hydroxy-(5Z,8Z,11Z,13E,17Z)-eicosapentaenoate + glutathione disulfide + H2O. It catalyses the reaction (15S)-hydroperoxy-(11Z,13E)-eicosadienoate + 2 glutathione = (15S)-hydroxy-(11Z,13E)-eicosadienoate + glutathione disulfide + H2O. The catalysed reaction is (17S)-hydroperoxy-(4Z,7Z,10Z,13Z,15E,19Z)-docosahexaenoate + 2 glutathione = (17S)-hydroxy-(4Z,7Z,10Z,13Z,15E,19Z)-docosahexaenoate + glutathione disulfide + H2O. It carries out the reaction a hydroperoxy-1,2-diacyl-glycero-3-phosphocholine + 2 glutathione = a hydroxy-1,2-diacyl-glycero-3-phosphocholine + glutathione disulfide + H2O. Essential antioxidant peroxidase that directly reduces phospholipid hydroperoxide even if they are incorporated in membranes and lipoproteins. Can also reduce fatty acid hydroperoxide, cholesterol hydroperoxide and thymine hydroperoxide. Plays a key role in protecting cells from oxidative damage by preventing membrane lipid peroxidation. Required to prevent cells from ferroptosis, a non-apoptotic cell death resulting from an iron-dependent accumulation of lipid reactive oxygen species. The presence of selenocysteine (Sec) versus Cys at the active site is essential for life: it provides resistance to overoxidation and prevents cells against ferroptosis. The presence of Sec at the active site is also essential for the survival of a specific type of parvalbumin-positive interneurons, thereby preventing against fatal epileptic seizures. May be required to protect cells from the toxicity of ingested lipid hydroperoxides. Required for normal sperm development and male fertility. Essential for maturation and survival of photoreceptor cells. Plays a role in a primary T-cell response to viral and parasitic infection by protecting T-cells from ferroptosis and by supporting T-cell expansion. Plays a role of glutathione peroxidase in platelets in the arachidonic acid metabolism. Reduces hydroperoxy ester lipids formed by a 15-lipoxygenase that may play a role as down-regulator of the cellular 15-lipoxygenase pathway. Can also reduce small soluble hydroperoxides such as H2O2, cumene hydroperoxide and tert-butyl hydroperoxide. This is Phospholipid hydroperoxide glutathione peroxidase from Sus scrofa (Pig).